Here is a 294-residue protein sequence, read N- to C-terminus: uncharacterized protein (294 aa).

This is an uncharacterized protein from Halobacterium salinarum (strain ATCC 700922 / JCM 11081 / NRC-1) (Halobacterium halobium).